We begin with the raw amino-acid sequence, 391 residues long: Formate-dependent phosphoribosylglycinamide formyltransferase (391 aa).

N(1)-(5-phospho-beta-D-ribosyl)glycinamide-binding positions include 20 to 21 (EL) and E80. ATP contacts are provided by residues R112, K153, 158–163 (SSGKGQ), 193–196 (EGFI), and E201. Residues 117 to 306 (RLAAETLGLP…EFALHVRAIL (190 aa)) enclose the ATP-grasp domain. Mg(2+)-binding residues include E265 and E277. Residues D284, K354, and 361–362 (RR) contribute to the N(1)-(5-phospho-beta-D-ribosyl)glycinamide site.

The protein belongs to the PurK/PurT family. Homodimer.

It carries out the reaction N(1)-(5-phospho-beta-D-ribosyl)glycinamide + formate + ATP = N(2)-formyl-N(1)-(5-phospho-beta-D-ribosyl)glycinamide + ADP + phosphate + H(+). Its pathway is purine metabolism; IMP biosynthesis via de novo pathway; N(2)-formyl-N(1)-(5-phospho-D-ribosyl)glycinamide from N(1)-(5-phospho-D-ribosyl)glycinamide (formate route): step 1/1. In terms of biological role, involved in the de novo purine biosynthesis. Catalyzes the transfer of formate to 5-phospho-ribosyl-glycinamide (GAR), producing 5-phospho-ribosyl-N-formylglycinamide (FGAR). Formate is provided by PurU via hydrolysis of 10-formyl-tetrahydrofolate. This is Formate-dependent phosphoribosylglycinamide formyltransferase from Shewanella oneidensis (strain ATCC 700550 / JCM 31522 / CIP 106686 / LMG 19005 / NCIMB 14063 / MR-1).